Consider the following 273-residue polypeptide: Glutamate racemase (273 aa).

Residues 10–11 (DS) and 42–43 (YG) contribute to the substrate site. Cys-73 acts as the Proton donor/acceptor in catalysis. 74 to 75 (NT) contributes to the substrate binding site. Catalysis depends on Cys-184, which acts as the Proton donor/acceptor. 185 to 186 (TH) lines the substrate pocket.

This sequence belongs to the aspartate/glutamate racemases family.

It catalyses the reaction L-glutamate = D-glutamate. It functions in the pathway cell wall biogenesis; peptidoglycan biosynthesis. Functionally, provides the (R)-glutamate required for cell wall biosynthesis. In Desulforudis audaxviator (strain MP104C), this protein is Glutamate racemase.